Here is a 671-residue protein sequence, read N- to C-terminus: Archaeal Rqc2 homolog aRqcH (671 aa).

Coiled-coil stretches lie at residues 291–363 and 410–465; these read KVVV…ARIK and RKNA…MQMK.

This sequence belongs to the NEMF family. As to quaternary structure, associates with stalled 50S ribosomal subunits.

Probably part of the ribosome quality control system (RQC). May mediate the addition of alanine residues (Ala tailing) to incompletely synthesized nascent chains from stalled ribosomes, leading to their degradation. This Methanocaldococcus jannaschii (strain ATCC 43067 / DSM 2661 / JAL-1 / JCM 10045 / NBRC 100440) (Methanococcus jannaschii) protein is Archaeal Rqc2 homolog aRqcH.